The primary structure comprises 83 residues: Toxin TdNa3 (83 aa).

An N-terminal signal peptide occupies residues Met1–Ser20. The 62-residue stretch at Lys21–Gly82 folds into the LCN-type CS-alpha/beta domain. Cystine bridges form between Cys31-Cys81, Cys35-Cys57, Cys43-Cys62, and Cys47-Cys64. Cys81 is subject to Cysteine amide.

It belongs to the long (4 C-C) scorpion toxin superfamily. Sodium channel inhibitor family. Beta subfamily. In terms of tissue distribution, expressed by the venom gland.

It localises to the secreted. Functionally, inhibits the sodium currents (Nav) in an apparent irreversible manner. Produces small depolarization and induces repetitive firing in squid axons. Is specific for arthropods (crickets, triatomides, crabs and squids), but is non-toxic to mice. This is Toxin TdNa3 from Tityus discrepans (Venezuelan scorpion).